Consider the following 149-residue polypeptide: Large ribosomal subunit protein bL9 (149 aa).

Belongs to the bacterial ribosomal protein bL9 family.

Binds to the 23S rRNA. This is Large ribosomal subunit protein bL9 from Persephonella marina (strain DSM 14350 / EX-H1).